The following is a 280-amino-acid chain: Divalent cation/proton antiporter GDT1 (280 aa).

The Cytoplasmic portion of the chain corresponds to 1 to 3 (MGN). Residues 4–24 (MIKKASLIALLPLFTAAAAAA) traverse the membrane as a helical segment. Residues 25 to 45 (TDAETSMESGSSSHLKSFLMS) are Vacuolar-facing. Residues 46–66 (VSMIGLSEIGDKTFLIAALMA) form a helical membrane-spanning segment. Over 67-71 (MRHKR) the chain is Cytoplasmic. The chain crosses the membrane as a helical span at residues 72–92 (VLVFSAAATSLAIMTILSGVV). At 93–104 (GHSAVAFLSERY) the chain is on the vacuolar side. The helical transmembrane segment at 105 to 125 (TAFFAGILFLVFGYKLTMEGL) threads the bilayer. At 126 to 183 (EMSKDAGVEEEMAEVEEEIAIKDMNQDMDDVEKGGDTAYDKQLKNASIGKKIVHRIRE) the chain is on the cytoplasmic side. Residues 184-204 (LASFMFSPVWVQIFLMVFLGE) form a helical membrane-spanning segment. Residues 205-222 (LGDRSQISIIAMATDSDY) are Vacuolar-facing. Residues 223 to 243 (WYVIAGAVIGHAICSGLAVVG) traverse the membrane as a helical segment. Over 244 to 255 (GKLLATRISIRT) the chain is Cytoplasmic. Residues 256-276 (ITLASSLLFFIFALMYIYQAF) form a helical membrane-spanning segment. Residues 277 to 280 (TTQD) are Vacuolar-facing.

This sequence belongs to the GDT1 family.

It is found in the golgi apparatus. Its subcellular location is the cis-Golgi network membrane. It carries out the reaction Ca(2+)(in) + n H(+)(out) = Ca(2+)(out) + n H(+)(in). It catalyses the reaction Mn(2+)(in) + n H(+)(out) = Mn(2+)(out) + n H(+)(in). Functionally, divalent cation:proton antiporter that exchanges calcium or manganese ions for protons across the Golgi membrane. Mediates the reversible transport of calcium or manganese to the Golgi lumen driven by the proton gradient and possibly the membrane potential generated by V-ATPase. Provides calcium or manganese cofactors to resident Golgi enzymes and contributes to the maintenance of an acidic luminal Golgi pH required for proper functioning of the secretory pathway. The transport stoichiometry remains to be elucidated. The protein is Divalent cation/proton antiporter GDT1 of Saccharomyces cerevisiae (strain ATCC 204508 / S288c) (Baker's yeast).